The chain runs to 321 residues: Phosphate acyltransferase (321 aa).

The protein belongs to the PlsX family. As to quaternary structure, homodimer. Probably interacts with PlsY.

The protein resides in the cytoplasm. The catalysed reaction is a fatty acyl-[ACP] + phosphate = an acyl phosphate + holo-[ACP]. The protein operates within lipid metabolism; phospholipid metabolism. Catalyzes the reversible formation of acyl-phosphate (acyl-PO(4)) from acyl-[acyl-carrier-protein] (acyl-ACP). This enzyme utilizes acyl-ACP as fatty acyl donor, but not acyl-CoA. This Chlamydia trachomatis serovar L2 (strain ATCC VR-902B / DSM 19102 / 434/Bu) protein is Phosphate acyltransferase.